Reading from the N-terminus, the 193-residue chain is NADH-quinone oxidoreductase subunit B (193 aa).

Residues cysteine 72, cysteine 73, cysteine 137, and cysteine 167 each contribute to the [4Fe-4S] cluster site.

It belongs to the complex I 20 kDa subunit family. NDH-1 is composed of 14 different subunits. Subunits NuoB, C, D, E, F, and G constitute the peripheral sector of the complex. [4Fe-4S] cluster is required as a cofactor.

The protein resides in the cell inner membrane. It catalyses the reaction a quinone + NADH + 5 H(+)(in) = a quinol + NAD(+) + 4 H(+)(out). Its function is as follows. NDH-1 shuttles electrons from NADH, via FMN and iron-sulfur (Fe-S) centers, to quinones in the respiratory chain. The immediate electron acceptor for the enzyme in this species is believed to be ubiquinone. Couples the redox reaction to proton translocation (for every two electrons transferred, four hydrogen ions are translocated across the cytoplasmic membrane), and thus conserves the redox energy in a proton gradient. The protein is NADH-quinone oxidoreductase subunit B of Phenylobacterium zucineum (strain HLK1).